We begin with the raw amino-acid sequence, 545 residues long: Carboxypeptidase Y homolog A (545 aa).

The first 17 residues, 1–17 (MKSLALALLVGGAIAAG), serve as a signal peptide directing secretion. A propeptide spanning residues 18–123 (PQQQVLQAPV…KLEAYDLRVK (106 aa)) is cleaved from the precursor. Disulfide bonds link Cys177–Cys416, Cys311–Cys325, Cys335–Cys358, Cys342–Cys351, and Cys380–Cys386. N-linked (GlcNAc...) asparagine glycosylation is present at Asn208. The active site involves Ser264. Asp455 is an active-site residue. 3 N-linked (GlcNAc...) asparagine glycosylation sites follow: Asn485, Asn491, and Asn506. Residue His517 is part of the active site.

It belongs to the peptidase S10 family.

Its subcellular location is the vacuole. It carries out the reaction Release of a C-terminal amino acid with broad specificity.. In terms of biological role, vacuolar carboxypeptidase involved in degradation of small peptides. Digests preferentially peptides containing an aliphatic or hydrophobic residue in P1' position, as well as methionine, leucine or phenylalanine in P1 position of ester substrate. This is Carboxypeptidase Y homolog A (CPYA) from Blastomyces gilchristii (strain SLH14081) (Blastomyces dermatitidis).